The sequence spans 2332 residues: Phosphatidylinositol phosphatase PTPRQ (2332 aa).

The N-terminal stretch at M1 to V35 is a signal peptide. Fibronectin type-III domains lie at E36–G99, P100–S195, K199–T294, P350–V438, A441–D539, G514–T606, V610–D705, S710–T799, A804–D894, P899–G988, P993–D1093, F1098–D1190, P1192–S1282, P1287–S1380, V1384–T1470, V1474–G1578, P1583–S1681, and P1686–P1787. Topologically, residues E36–E1947 are extracellular. N-linked (GlcNAc...) asparagine glycosylation occurs at N94. 2 N-linked (GlcNAc...) asparagine glycosylation sites follow: N202 and N394. N-linked (GlcNAc...) asparagine glycans are attached at residues N944, N1038, N1080, and N1101. 2 N-linked (GlcNAc...) asparagine glycosylation sites follow: N1290 and N1295. N-linked (GlcNAc...) asparagine glycosylation occurs at N1844. A helical transmembrane segment spans residues I1948–A1968. Residues F1969 to M2332 are Cytoplasmic-facing. The 257-residue stretch at F2036–L2292 folds into the Tyrosine-protein phosphatase domain. Catalysis depends on C2233, which acts as the Phosphocysteine intermediate.

This sequence belongs to the protein-tyrosine phosphatase family. Receptor class 2A subfamily. In terms of assembly, interacts with TPRN. TPRN, CLIC5 and PTPQR form concentric rings at the base of stereocilia and may form a complex. In terms of tissue distribution, in developing kidney, it localizes to the basal membrane of podocytes, beginning when podocyte progenitors can first be identified in the embryonic kidney (at protein level). Expressed in lung and kidney.

It is found in the cell projection. The protein localises to the stereocilium. Its subcellular location is the apical cell membrane. It localises to the basal cell membrane. It catalyses the reaction a 1,2-diacyl-sn-glycero-3-phospho-(1D-myo-inositol-3,4,5-trisphosphate) + H2O = a 1,2-diacyl-sn-glycero-3-phospho-(1D-myo-inositol-4,5-bisphosphate) + phosphate. The catalysed reaction is a 1,2-diacyl-sn-glycero-3-phospho-(1D-myo-inositol-3,4,5-trisphosphate) + H2O = a 1,2-diacyl-sn-glycero-3-phospho-(1D-myo-inositol-3,4-bisphosphate) + phosphate. It carries out the reaction a 1,2-diacyl-sn-glycero-3-phospho-(1D-myo-inositol-3,5-bisphosphate) + H2O = a 1,2-diacyl-sn-glycero-3-phospho-(1D-myo-inositol-5-phosphate) + phosphate. The enzyme catalyses a 1,2-diacyl-sn-glycero-3-phospho-(1D-myo-inositol-3,5-bisphosphate) + H2O = a 1,2-diacyl-sn-glycero-3-phospho-(1D-myo-inositol-3-phosphate) + phosphate. Its function is as follows. Dephosphorylates phosphatidylinositol phosphates, such as phosphatidylinositol 3,4,5-trisphosphate (PIP3) and phosphatidylinositol 3,5-diphosphates, with preference for PIP3. Phosphate can be hydrolyzed from the D3 and D5 positions in the inositol ring. Has low tyrosine-protein phosphatase activity in vitro; however, the relevance of such activity in vivo is unclear. Plays an important role in adipogenesis of mesenchymal stem cells (MSCs). Regulates the phosphorylation state of AKT1 by regulating the levels of PIP3 in MSCs and preadipocyte cells. Required for hair bundle maturation, a process that enables hair cells to detect and transmit sound and balance signals effectively, therefore affecting auditory function. May act by regulating the level of phosphatidylinositol 4,5-bisphosphate (PIP2) level in the basal region of hair bundles. This Homo sapiens (Human) protein is Phosphatidylinositol phosphatase PTPRQ (PTPRQ).